The following is a 1351-amino-acid chain: ABC transporter C family member 6 (1351 aa).

Residues 112 to 397 enclose the ABC transmembrane type-1 1 domain; it reads NKYALVSNLF…LPYDIFKAIG (286 aa). A run of 3 helical transmembrane segments spans residues 120 to 140, 149 to 169, and 248 to 268; these read LFII…INYI, SILK…GQSI, and LLCY…VIAL. Residues 474–700 enclose the ABC transporter 1 domain; the sequence is NQDESINKKE…GIDFKSILKT (227 aa). 510–517 lines the ATP pocket; it reads GVVGSGKT. Residues 701–734 adopt a coiled-coil conformation; that stretch reads KEIKKNVENETDSEELIKNEIEIENEIIDVNNAI. 6 helical membrane passes run 771-791, 815-835, 904-924, 977-999, 1002-1022, and 1025-1045; these read GSSG…QAIF, IGYY…RILL, LISI…LSIA, MFDN…RWVS, LEVM…LFIS, and GLAA…SWGI. One can recognise an ABC transmembrane type-1 2 domain in the interval 777 to 1060; sequence LFITISLFFV…LEVKMNSFQR (284 aa). Residues 1101–1336 form the ABC transporter 2 domain; that stretch reads IEFKNVEIKY…PNSKFNKLIK (236 aa). 1135–1142 is an ATP binding site; the sequence is GRTGAGKT.

The protein belongs to the ABC transporter superfamily. ABCC family. Conjugate transporter (TC 3.A.1.208) subfamily.

Its subcellular location is the membrane. In Dictyostelium discoideum (Social amoeba), this protein is ABC transporter C family member 6 (abcC6).